Consider the following 81-residue polypeptide: MRITIYTRNDCVQCHATKRAMENRGFDFEMINVDRVPEAAEALRAQGFRQLPVVIAGDLSWSGFRPDMINRLHPAPHAASA.

In terms of domain architecture, Glutaredoxin spans 1 to 81 (MRITIYTRND…LHPAPHAASA (81 aa)). A disulfide bridge connects residues cysteine 11 and cysteine 14.

Belongs to the glutaredoxin family.

Electron transport system for the ribonucleotide reductase system NrdEF. The chain is Glutaredoxin-like protein NrdH (nrdH) from Escherichia coli O157:H7.